The following is a 605-amino-acid chain: Phosphoenolpyruvate carboxykinase [GTP] (605 aa).

Substrate is bound by residues R79 and 218-220 (YGG). Mn(2+)-binding residues include K227 and H247. Residue S269 participates in substrate binding. 270–275 (ACGKTN) is a GTP binding site. Residue C271 is part of the active site. D294 is a binding site for Mn(2+). The segment covering 364-381 (LTDWKGRDWTPQSDEKAA) has biased composition (basic and acidic residues). Residues 364–385 (LTDWKGRDWTPQSDEKAAHPNS) form a disordered region. Position 384–386 (384–386 (NSR)) interacts with substrate. GTP contacts are provided by residues R386, R417, and 513–516 (FGEN).

Belongs to the phosphoenolpyruvate carboxykinase [GTP] family. Monomer. The cofactor is Mn(2+).

It is found in the cytoplasm. It catalyses the reaction oxaloacetate + GTP = phosphoenolpyruvate + GDP + CO2. The protein operates within carbohydrate biosynthesis; gluconeogenesis. Catalyzes the conversion of oxaloacetate (OAA) to phosphoenolpyruvate (PEP), the rate-limiting step in the metabolic pathway that produces glucose from lactate and other precursors derived from the citric acid cycle. The chain is Phosphoenolpyruvate carboxykinase [GTP] from Saccharopolyspora erythraea (strain ATCC 11635 / DSM 40517 / JCM 4748 / NBRC 13426 / NCIMB 8594 / NRRL 2338).